The sequence spans 100 residues: Large ribosomal subunit protein eL30 (100 aa).

This sequence belongs to the eukaryotic ribosomal protein eL30 family.

The sequence is that of Large ribosomal subunit protein eL30 from Thermococcus sibiricus (strain DSM 12597 / MM 739).